The sequence spans 85 residues: Growth factor (85 aa).

Residues Met1–Ala19 form the signal peptide. Residues Arg33–Gln77 form the EGF-like domain. 3 disulfide bridges follow: Cys37–Cys51, Cys45–Cys65, and Cys67–Cys76. Asn48 and Asn58 each carry an N-linked (GlcNAc...) asparagine; by host glycan.

The protein resides in the secreted. Its function is as follows. Stimulates the growth of some tissues. This Oryctolagus cuniculus (Rabbit) protein is Growth factor (MGF).